Reading from the N-terminus, the 114-residue chain is Probable protein adenylyltransferase MntA (114 aa).

A GSX(10)DXD motif motif is present at residues 34–48 (GSRVKGKAKKYSDLD). Active-site residues include aspartate 46 and aspartate 48. The Mg(2+) site is built by aspartate 46, aspartate 48, glutamate 67, glutamate 71, and aspartate 79.

Belongs to the MntA antitoxin family. In terms of assembly, forms a complex with HepT, probably with a stoichiometry of 2:2. It depends on Mg(2+) as a cofactor.

It carries out the reaction L-tyrosyl-[protein] + ATP = O-(5'-adenylyl)-L-tyrosyl-[protein] + diphosphate. The catalysed reaction is O-(5'-adenylyl)-L-tyrosyl-[protein] + ATP = O-[5'-(adenylyl-(5'-&gt;3')-adenylyl)]-L-tyrosyl-[protein] + diphosphate. In terms of biological role, probable antitoxin component of a type VII toxin-antitoxin (TA) system. Neutralizes cognate toxic HEPN probably by di-AMPylation. A mixture of HepT and MntA binds nucleotides; the highest affinity is for TTP, ATP binds more tightly than ADP or AMP. This is Probable protein adenylyltransferase MntA (mntA) from Haemophilus influenzae (strain ATCC 51907 / DSM 11121 / KW20 / Rd).